The following is a 114-amino-acid chain: Non-specific lipid-transfer protein 2 (114 aa).

An N-terminal signal peptide occupies residues 1 to 23 (MEMVNKIACFVLLCMVVVAPHAE). Intrachain disulfides connect cysteine 27–cysteine 73, cysteine 37–cysteine 50, cysteine 51–cysteine 96, and cysteine 71–cysteine 110.

It belongs to the plant LTP family.

In terms of biological role, plant non-specific lipid-transfer proteins transfer phospholipids as well as galactolipids across membranes. May play a role in wax or cutin deposition in the cell walls of expanding epidermal cells and certain secretory tissues. The protein is Non-specific lipid-transfer protein 2 of Solanum chilense (Tomato).